The following is a 465-amino-acid chain: Cysteine--tRNA ligase (465 aa).

Cys27 contributes to the Zn(2+) binding site. Residues 29–39 (PTVYNFFHIGN) carry the 'HIGH' region motif. The Zn(2+) site is built by Cys207, His232, and Glu236. The short motif at 264–268 (KMSKS) is the 'KMSKS' region element. Lys267 is a binding site for ATP.

Belongs to the class-I aminoacyl-tRNA synthetase family. As to quaternary structure, monomer. Zn(2+) is required as a cofactor.

The protein localises to the cytoplasm. The enzyme catalyses tRNA(Cys) + L-cysteine + ATP = L-cysteinyl-tRNA(Cys) + AMP + diphosphate. This chain is Cysteine--tRNA ligase, found in Clostridium botulinum (strain 657 / Type Ba4).